We begin with the raw amino-acid sequence, 206 residues long: Ribosomal RNA large subunit methyltransferase E (206 aa).

S-adenosyl-L-methionine-binding residues include G61, W63, D81, D97, and D122. Residue K162 is the Proton acceptor of the active site.

It belongs to the class I-like SAM-binding methyltransferase superfamily. RNA methyltransferase RlmE family.

It is found in the cytoplasm. It carries out the reaction uridine(2552) in 23S rRNA + S-adenosyl-L-methionine = 2'-O-methyluridine(2552) in 23S rRNA + S-adenosyl-L-homocysteine + H(+). In terms of biological role, specifically methylates the uridine in position 2552 of 23S rRNA at the 2'-O position of the ribose in the fully assembled 50S ribosomal subunit. The polypeptide is Ribosomal RNA large subunit methyltransferase E (Neisseria meningitidis serogroup C (strain 053442)).